A 408-amino-acid chain; its full sequence is LL-diaminopimelate aminotransferase (408 aa).

Substrate-binding residues include tyrosine 15 and glycine 42. Residues tyrosine 72, 108 to 109 (SK), tyrosine 132, asparagine 187, tyrosine 218, and 246 to 248 (SFS) each bind pyridoxal 5'-phosphate. The substrate site is built by lysine 109, tyrosine 132, and asparagine 187. The residue at position 249 (lysine 249) is an N6-(pyridoxal phosphate)lysine. Pyridoxal 5'-phosphate contacts are provided by arginine 257 and asparagine 292. Positions 292 and 388 each coordinate substrate.

It belongs to the class-I pyridoxal-phosphate-dependent aminotransferase family. LL-diaminopimelate aminotransferase subfamily. In terms of assembly, homodimer. Requires pyridoxal 5'-phosphate as cofactor.

The enzyme catalyses (2S,6S)-2,6-diaminopimelate + 2-oxoglutarate = (S)-2,3,4,5-tetrahydrodipicolinate + L-glutamate + H2O + H(+). It functions in the pathway amino-acid biosynthesis; L-lysine biosynthesis via DAP pathway; LL-2,6-diaminopimelate from (S)-tetrahydrodipicolinate (aminotransferase route): step 1/1. Its function is as follows. Involved in the synthesis of meso-diaminopimelate (m-DAP or DL-DAP), required for both lysine and peptidoglycan biosynthesis. Catalyzes the direct conversion of tetrahydrodipicolinate to LL-diaminopimelate. Is also able to catalyze the reverse reaction in vitro, i.e. the transamination of LL-diaminopimelate with 2-oxoglutarate to produce tetrahydrodipicolinate and glutamate. Cannot use m-DAP, lysine or ornithine as the amino-group donor, when using 2-oxoglutarate as the amino-group acceptor. Cannot use pyruvate, indole 3-pyruvate, oxaloacetate or phenyl pyruvate as the amino-group acceptor, when using LL-DAP as the amino-group donor. The sequence is that of LL-diaminopimelate aminotransferase from Leptospira interrogans serogroup Icterohaemorrhagiae serovar copenhageni (strain Fiocruz L1-130).